The chain runs to 664 residues: DNA ligase (664 aa).

NAD(+)-binding positions include 32–36 (DKEYD) and 80–81 (SL). Lys122 (N6-AMP-lysine intermediate) is an active-site residue. Positions 144, 178, and 314 each coordinate NAD(+). Zn(2+) contacts are provided by Cys407, Cys410, Cys423, and Cys429. The 78-residue stretch at 587-664 (IDENPFMGKT…NEEEFSNKIK (78 aa)) folds into the BRCT domain.

This sequence belongs to the NAD-dependent DNA ligase family. LigA subfamily. Mg(2+) serves as cofactor. The cofactor is Mn(2+).

The enzyme catalyses NAD(+) + (deoxyribonucleotide)n-3'-hydroxyl + 5'-phospho-(deoxyribonucleotide)m = (deoxyribonucleotide)n+m + AMP + beta-nicotinamide D-nucleotide.. DNA ligase that catalyzes the formation of phosphodiester linkages between 5'-phosphoryl and 3'-hydroxyl groups in double-stranded DNA using NAD as a coenzyme and as the energy source for the reaction. It is essential for DNA replication and repair of damaged DNA. The sequence is that of DNA ligase from Clostridium botulinum (strain Kyoto / Type A2).